A 436-amino-acid polypeptide reads, in one-letter code: GTPase Der (436 aa).

EngA-type G domains are found at residues 4-167 and 175-351; these read PTVA…PVEE and IRFS…ESQN. GTP-binding positions include 10–17, 57–61, 119–122, 181–188, 229–233, and 294–297; these read GRPNVGKS, DTGGI, NKVD, DTAGM, and NKWD. Residues 352-436 enclose the KH-like domain; sequence KRIPSAVLND…PIHLIARKRK (85 aa).

The protein belongs to the TRAFAC class TrmE-Era-EngA-EngB-Septin-like GTPase superfamily. EngA (Der) GTPase family. In terms of assembly, associates with the 50S ribosomal subunit.

GTPase that plays an essential role in the late steps of ribosome biogenesis. The sequence is that of GTPase Der from Streptococcus pyogenes serotype M2 (strain MGAS10270).